The chain runs to 79 residues: Small ribosomal subunit protein bS18 (79 aa).

It belongs to the bacterial ribosomal protein bS18 family. In terms of assembly, part of the 30S ribosomal subunit. Forms a tight heterodimer with protein bS6.

Functionally, binds as a heterodimer with protein bS6 to the central domain of the 16S rRNA, where it helps stabilize the platform of the 30S subunit. The polypeptide is Small ribosomal subunit protein bS18 (Rhodopseudomonas palustris (strain HaA2)).